A 357-amino-acid polypeptide reads, in one-letter code: MDDHDDSPVSPSFLKSDGEIEASLRPKSLDDFIGQPRVREQLALVLRGAKQRGSTPDHVLLSGPPGLGKTSMAMIIAAELGTALRITSGPALERAGDLAAMLSNLVEGDVLFIDEIHRIARPAEEMLYLAMEDFRVDVVVGKGPGATSIPLDIAPFTLVGATTRSGALTGPLRDRFGFTGHMDFYEPGELLRILERSAQILGVRIETDAAAEIAGRSRGTPRIANRLLRRVRDYAEVRADGIVTLPVARAALEVYDVDTLGLDRLDRAVLDALVRGFHGGPVGVSTLAVAVGEEATTVEEVCEPFLVRAGLVARTPRGRVATAAAWEHLGLVPPPDLVFGSIEVRGRTSQPTLDLFD.

Residues 1–20 (MDDHDDSPVSPSFLKSDGEI) are disordered. Positions 1–185 (MDDHDDSPVS…FGFTGHMDFY (185 aa)) are large ATPase domain (RuvB-L). ATP contacts are provided by residues Leu-24, Arg-25, Gly-66, Lys-69, Thr-70, Ser-71, 132 to 134 (EDF), Arg-175, Tyr-185, and Arg-222. Residue Thr-70 coordinates Mg(2+). Residues 186 to 256 (EPGELLRILE…VARAALEVYD (71 aa)) form a small ATPAse domain (RuvB-S) region. The segment at 259 to 357 (TLGLDRLDRA…TSQPTLDLFD (99 aa)) is head domain (RuvB-H). Arg-314 and Arg-319 together coordinate DNA.

The protein belongs to the RuvB family. As to quaternary structure, homohexamer. Forms an RuvA(8)-RuvB(12)-Holliday junction (HJ) complex. HJ DNA is sandwiched between 2 RuvA tetramers; dsDNA enters through RuvA and exits via RuvB. An RuvB hexamer assembles on each DNA strand where it exits the tetramer. Each RuvB hexamer is contacted by two RuvA subunits (via domain III) on 2 adjacent RuvB subunits; this complex drives branch migration. In the full resolvosome a probable DNA-RuvA(4)-RuvB(12)-RuvC(2) complex forms which resolves the HJ.

The protein localises to the cytoplasm. The catalysed reaction is ATP + H2O = ADP + phosphate + H(+). In terms of biological role, the RuvA-RuvB-RuvC complex processes Holliday junction (HJ) DNA during genetic recombination and DNA repair, while the RuvA-RuvB complex plays an important role in the rescue of blocked DNA replication forks via replication fork reversal (RFR). RuvA specifically binds to HJ cruciform DNA, conferring on it an open structure. The RuvB hexamer acts as an ATP-dependent pump, pulling dsDNA into and through the RuvAB complex. RuvB forms 2 homohexamers on either side of HJ DNA bound by 1 or 2 RuvA tetramers; 4 subunits per hexamer contact DNA at a time. Coordinated motions by a converter formed by DNA-disengaged RuvB subunits stimulates ATP hydrolysis and nucleotide exchange. Immobilization of the converter enables RuvB to convert the ATP-contained energy into a lever motion, pulling 2 nucleotides of DNA out of the RuvA tetramer per ATP hydrolyzed, thus driving DNA branch migration. The RuvB motors rotate together with the DNA substrate, which together with the progressing nucleotide cycle form the mechanistic basis for DNA recombination by continuous HJ branch migration. Branch migration allows RuvC to scan DNA until it finds its consensus sequence, where it cleaves and resolves cruciform DNA. This is Holliday junction branch migration complex subunit RuvB from Nocardia farcinica (strain IFM 10152).